A 139-amino-acid polypeptide reads, in one-letter code: Large-conductance mechanosensitive channel (139 aa).

3 consecutive transmembrane segments (helical) span residues 19–39, 40–60, and 81–101; these read VGVI…ADII, MPIV…LPLS, and GNFL…FMVI.

It belongs to the MscL family. In terms of assembly, homopentamer.

The protein localises to the cell inner membrane. Channel that opens in response to stretch forces in the membrane lipid bilayer. May participate in the regulation of osmotic pressure changes within the cell. The protein is Large-conductance mechanosensitive channel of Nitrobacter winogradskyi (strain ATCC 25391 / DSM 10237 / CIP 104748 / NCIMB 11846 / Nb-255).